A 264-amino-acid polypeptide reads, in one-letter code: Protein Saci_1508 (264 aa).

This sequence belongs to the CinA family.

The protein is Protein Saci_1508 of Sulfolobus acidocaldarius (strain ATCC 33909 / DSM 639 / JCM 8929 / NBRC 15157 / NCIMB 11770).